The primary structure comprises 311 residues: MNKNKPFIVVIVGPTASGKTELSIELAKRINGEIISGDSMQVYKHMNIGTAKVTPEEMDGIPHHLIGILNPDDTFSAYEFKRLAEDLITDITNRGKVPIIAGGTGLYIQSLIYNYELEDETVTPAQLSVVKQKLSALEHLDNQQLHEYLAQFDEASAKNIHPNNRQRVLRAIEYYFKTKKLLSNRKKVQQFTENYDTLLIGIEMSRKTLYSRINKRVDIMLDHGLFREVQQLVEQGYESCQSMQAIGYKELIPVINGQMIYEDAVNDLKQHSRQYAKRQMTWFKNKMSVHWLDKENMSLQMMLDEITTQIK.

Position 13–20 (13–20 (GPTASGKT)) interacts with ATP. Residue 15–20 (TASGKT) participates in substrate binding. Interaction with substrate tRNA regions lie at residues 38 to 41 (DSMQ) and 166 to 170 (QRVLR).

The protein belongs to the IPP transferase family. Monomer. The cofactor is Mg(2+).

It carries out the reaction adenosine(37) in tRNA + dimethylallyl diphosphate = N(6)-dimethylallyladenosine(37) in tRNA + diphosphate. Catalyzes the transfer of a dimethylallyl group onto the adenine at position 37 in tRNAs that read codons beginning with uridine, leading to the formation of N6-(dimethylallyl)adenosine (i(6)A). The protein is tRNA dimethylallyltransferase of Staphylococcus aureus (strain MRSA252).